The following is a 670-amino-acid chain: MNKVNNYQNINSVIISKKEVGLRDLIKLKSIFNLIQIVKSEKALYSEYVKQNNIKFAIIYNYEKPIDFSINIANELKNANKIHSIIISKEKFDEEYLKLDHIEIIKDISELEYKQSLIHQKKLFCDNKNTTLDFFLNLSELIKEIVIITNTKNEIIYINEKGSKNLNLPMKTSGNIIKVTDIDIRDWEKLEKINLSYHTNSIPEFKNILITDCLLTLKNNKKLHVDIFISTIAQNNIDKLITIKEISNSNKIENYKYLEIIDSQDEIQNAKEIEKLLVNHMDIYKKKSIYLLNLDVSLTAEYEYKEDQEKLNAKILKIMYSKIMSLYSEYIFKLKHNNLIVIISTSGGEKRIISIAKKIKKTIALAFKKEDIIIFKFNIGIIEVNLKENLEFKIPKLMMATKISSEYKESNPTIYKEELPEAVILKNQNKIFQYILKAIKNDFFTLYYQKINPLKKNLKPKIEILTRLFDHMGKPIPNNQIFNLIDKYNLTVEVDTLVVKKALREYKSFVSKNGIHIFSINISPYSLKSQNFRIFLRDTLLKSQIPLQNICLEITETGILENFEIINKYFQELKSFGIKLALDDFGSGHTSLSYIKTLPIDLLKIDGSFIKAINSSEIDFVIIKSIKKIADTKNIKIIAEFVYNEEILKKIIELEIDYGQGFLWHKPEPI.

The EAL domain occupies 428 to 670; the sequence is QNKIFQYILK…GFLWHKPEPI (243 aa).

The enzyme catalyses 3',3'-c-di-GMP + H2O = 5'-phosphoguanylyl(3'-&gt;5')guanosine + H(+). Functionally, phosphodiesterase (PDE) that catalyzes the hydrolysis of cyclic diguanylate (c-di-GMP) to pGpG. The chain is Cyclic di-GMP phosphodiesterase PdeA from Borreliella burgdorferi (strain ATCC 35210 / DSM 4680 / CIP 102532 / B31) (Borrelia burgdorferi).